The sequence spans 146 residues: MORN repeat-containing protein 4 (146 aa).

4 MORN repeats span residues 16-38 (YRGEWKEGRRHGFGQLMFADGGT), 39-61 (YLGHFENGLFNGFGVLTFSDGSR), 62-84 (YEGEFAQGKFNGVGVFIRHDNMT), and 85-107 (FEGEFKNGRVDGLGLLTFPDGSH).

As to quaternary structure, interacts with MYO3A. As to expression, retina.

It is found in the cytoplasm. The protein localises to the cell projection. Its subcellular location is the filopodium tip. The protein resides in the stereocilium. In terms of biological role, plays a role in promoting axonal degeneration following neuronal injury by toxic insult or trauma. The polypeptide is MORN repeat-containing protein 4 (MORN4) (Bos taurus (Bovine)).